We begin with the raw amino-acid sequence, 462 residues long: UDP-N-acetylmuramoylalanine--D-glutamate ligase (462 aa).

Residue 117–123 (GTNGKTT) participates in ATP binding.

This sequence belongs to the MurCDEF family.

It localises to the cytoplasm. The catalysed reaction is UDP-N-acetyl-alpha-D-muramoyl-L-alanine + D-glutamate + ATP = UDP-N-acetyl-alpha-D-muramoyl-L-alanyl-D-glutamate + ADP + phosphate + H(+). It participates in cell wall biogenesis; peptidoglycan biosynthesis. Its function is as follows. Cell wall formation. Catalyzes the addition of glutamate to the nucleotide precursor UDP-N-acetylmuramoyl-L-alanine (UMA). This chain is UDP-N-acetylmuramoylalanine--D-glutamate ligase, found in Synechococcus sp. (strain CC9902).